A 117-amino-acid polypeptide reads, in one-letter code: Non-specific lipid-transfer protein 1 (117 aa).

Residues 1–26 form the signal peptide; sequence MARAQVLLMAAALVLMLTAAPRAAVA. 4 disulfides stabilise this stretch: Cys29-Cys76, Cys39-Cys53, Cys54-Cys99, and Cys74-Cys113. Asp33 is lipidated: Cis-14-hydroxy-10,13-dioxo-7-heptadecenoic acid aspartate ester.

This sequence belongs to the plant LTP family. As to expression, aleurone layer of developing and germinating seeds.

Functionally, plant non-specific lipid-transfer proteins transfer phospholipids as well as galactolipids across membranes. May play a role in wax or cutin deposition in the cell walls of expanding epidermal cells and certain secretory tissues. The sequence is that of Non-specific lipid-transfer protein 1 (LTP1) from Hordeum vulgare (Barley).